Here is a 430-residue protein sequence, read N- to C-terminus: L-lysine N6-monooxygenase MbtG (430 aa).

The N-terminal stretch at 1–21 (MTATLAVIGAGPKAVAVAAKA) is a signal peptide.

It belongs to the lysine N(6)-hydroxylase/L-ornithine N(5)-oxygenase family. The cofactor is FAD.

It catalyses the reaction L-lysine + NADPH + O2 = N(6)-hydroxy-L-lysine + NADP(+) + H2O. Its pathway is siderophore biosynthesis; mycobactin biosynthesis. Flavoprotein monooxygenase required for N-hydroxylation of the two acylated lysine residues during mycobactin assembly, thus producing the hydroxamate groups necessary for iron sequestration. Is also able, but less efficiently, to hydroxylate L-lysine (non acylated) in vitro. In Mycobacterium sp. (strain MCS), this protein is L-lysine N6-monooxygenase MbtG (mbtG).